Consider the following 330-residue polypeptide: MAVISELKRHHPKTGLLRYLPTGVVPYGELVRIHRALGYYLNTSPYVVGIAYTAATAETKLPLDLLLDRLLLLTLWSLILRSAGCAWNDLVDVDIDRQISRTQSRPLPRGAISLSAATIFTACLFVLGCSLLLFLPRECLFDAGIKVFFALLYPFGKRFTDHPQLILINIAWAIPMAMHSLGMEPSSQILSMLCMCVFFSAVIVMIDLVYSRQDTEEDLKVGVKSMAVRYRNCVETMAYSLFAISSLALLFGGVLGGLRVPFVLFSVGGHIVGFWRFLRASLQAGPAGVESRAKSSCLIASVFWVLGLGIEYAEMVKEKDNPTDKKKHPH.

Transmembrane regions (helical) follow at residues 116–136 (AATI…LFLP), 165–185 (LILI…GMEP), 189–209 (ILSM…IDLV), 238–258 (AYSL…LGGL), and 260–280 (VPFV…FLRA).

This sequence belongs to the UbiA prenyltransferase family. It depends on Mg(2+) as a cofactor.

The protein resides in the membrane. It carries out the reaction 3,5-dimethylorsellinate + (2E,6E)-farnesyl diphosphate = (3R)-3-farnesyl-6-hydroxy-2,3,5-trimethyl-4-oxocyclohexa-1,5-diene-1-carboxylate + diphosphate + H(+). It functions in the pathway secondary metabolite biosynthesis; terpenoid biosynthesis. In terms of biological role, polyprenyl transferase; part of the gene cluster B that mediates the biosynthesis of austinol and dehydroaustinol, two fungal meroterpenoids. The first step of the pathway is the synthesis of 3,5-dimethylorsellinic acid by the polyketide synthase ausA. 3,5-dimethylorsellinic acid is then prenylated by the polyprenyl transferase ausN. Further epoxidation by the FAD-dependent monooxygenase ausM and cyclization by the probable terpene cyclase ausL lead to the formation of protoaustinoid A. Protoaustinoid A is then oxidized to spiro-lactone preaustinoid A3 by the combined action of the FAD-binding monooxygenases ausB and ausC, and the dioxygenase ausE. Acid-catalyzed keto-rearrangement and ring contraction of the tetraketide portion of preaustinoid A3 by ausJ lead to the formation of preaustinoid A4. The aldo-keto reductase ausK, with the help of ausH, is involved in the next step by transforming preaustinoid A4 into isoaustinone which is in turn hydroxylated by the P450 monooxygenase ausI to form austinolide. Finally, the cytochrome P450 monooxygenase ausG modifies austinolide to austinol. Austinol can be further modified to dehydroaustinol which forms a diffusible complex with diorcinol that initiates conidiation. Due to genetic rearrangements of the clusters and the subsequent loss of some enzymes, the end products of the Emericella nidulans austinoid biosynthesis clusters are austinol and dehydroaustinol, even if additional enzymes, such as the O-acetyltransferase ausQ and the cytochrome P450 monooxygenase ausR are still functional. The sequence is that of Polyprenyl transferase ausN from Emericella nidulans (strain FGSC A4 / ATCC 38163 / CBS 112.46 / NRRL 194 / M139) (Aspergillus nidulans).